A 362-amino-acid polypeptide reads, in one-letter code: Cobalt-precorrin-5B C(1)-methyltransferase (362 aa).

It belongs to the CbiD family.

It catalyses the reaction Co-precorrin-5B + S-adenosyl-L-methionine = Co-precorrin-6A + S-adenosyl-L-homocysteine. It participates in cofactor biosynthesis; adenosylcobalamin biosynthesis; cob(II)yrinate a,c-diamide from sirohydrochlorin (anaerobic route): step 6/10. Its function is as follows. Catalyzes the methylation of C-1 in cobalt-precorrin-5B to form cobalt-precorrin-6A. The protein is Cobalt-precorrin-5B C(1)-methyltransferase of Synechococcus sp. (strain CC9902).